Consider the following 1443-residue polypeptide: ARF guanine-nucleotide exchange factor GNL1 (1443 aa).

One can recognise an SEC7 domain in the interval 554 to 743 (FVRKVKHIKK…SEIYHSIRHS (190 aa)). The active site involves Glu-658. Disordered stretches follow at residues 917-949 (DDPE…AMPR) and 1424-1443 (DQFQ…GNEV). Polar residues predominate over residues 939 to 949 (VSQSQPSAMPR). The span at 1425-1435 (QFQRRNAKPED) shows a compositional bias: basic and acidic residues.

In terms of assembly, homodimer.

It is found in the cytoplasm. The protein localises to the cytosol. The protein resides in the golgi apparatus membrane. Activates the ARF proteins by exchanging bound GDP for free GTP. Plays a role in vesicular protein sorting. Acts as the major regulator of retrograde Golgi to endoplasmic reticulum trafficking but is also involved in the endocytosis process. Could function redundantly with GNOM. Regulates vesicle trafficking required for the coordinated polar localization of auxin efflux carriers which in turn determines the direction of auxin flow. Mediates the endocytosis of PIN2 from plasma membrane to endosomal compartments. Required for maintenance of endoplasmic reticulum morphology. The sequence is that of ARF guanine-nucleotide exchange factor GNL1 (GNL1) from Arabidopsis thaliana (Mouse-ear cress).